The chain runs to 109 residues: Prefoldin subunit 1 (109 aa).

Serine 2 bears the N-acetylserine mark.

Belongs to the prefoldin subunit beta family. As to quaternary structure, heterohexamer of two PFD-alpha type and four PFD-beta type subunits.

Its subcellular location is the cytoplasm. Binds specifically to cytosolic chaperonin (c-CPN) and transfers target proteins to it. Binds to nascent polypeptide chain and promotes folding in an environment in which there are many competing pathways for nonnative proteins. The protein is Prefoldin subunit 1 (PFD1) of Saccharomyces cerevisiae (strain ATCC 204508 / S288c) (Baker's yeast).